The sequence spans 643 residues: Threonine--tRNA ligase (643 aa).

One can recognise a TGS domain in the interval 1–61 (MPIITLPDGS…EQDATLEIIT (61 aa)). The interval 243-534 (DHRKIGKALD…ITEEYAGFFP (292 aa)) is catalytic. Zn(2+)-binding residues include C334, H385, and H511.

It belongs to the class-II aminoacyl-tRNA synthetase family. In terms of assembly, homodimer. Zn(2+) is required as a cofactor.

It localises to the cytoplasm. It carries out the reaction tRNA(Thr) + L-threonine + ATP = L-threonyl-tRNA(Thr) + AMP + diphosphate + H(+). Its function is as follows. Catalyzes the attachment of threonine to tRNA(Thr) in a two-step reaction: L-threonine is first activated by ATP to form Thr-AMP and then transferred to the acceptor end of tRNA(Thr). Also edits incorrectly charged L-seryl-tRNA(Thr). The sequence is that of Threonine--tRNA ligase from Haemophilus influenzae (strain ATCC 51907 / DSM 11121 / KW20 / Rd).